The chain runs to 228 residues: MIPSTYPNNSTMAAMTARMLLDIRAVHFNTDEPFTHASGLQAPTYIDCRKLISHPRIRSTAMDFLTCKVMRDAGLEAFDNIAGGETAGIPFAAFVAERMALPMSYVRKKPKGYGKTAQIEGEMPEGARVLLVEDLTTDGGSKLKFVDAIRNAGATCAHTAVVFSYGNLPETEANLAAHGLTLHSLTTWADVIAEARRGSDFNEATLTEVERFLSDPGGWRGDRGLNTD.

Residues arginine 107, lysine 108, lysine 111, and 133–141 (EDLTTDGGS) contribute to the 5-phospho-alpha-D-ribose 1-diphosphate site. Position 137 (threonine 137) interacts with orotate.

This sequence belongs to the purine/pyrimidine phosphoribosyltransferase family. PyrE subfamily. Homodimer. The cofactor is Mg(2+).

It catalyses the reaction orotidine 5'-phosphate + diphosphate = orotate + 5-phospho-alpha-D-ribose 1-diphosphate. The protein operates within pyrimidine metabolism; UMP biosynthesis via de novo pathway; UMP from orotate: step 1/2. Its function is as follows. Catalyzes the transfer of a ribosyl phosphate group from 5-phosphoribose 1-diphosphate to orotate, leading to the formation of orotidine monophosphate (OMP). The protein is Orotate phosphoribosyltransferase of Jannaschia sp. (strain CCS1).